The primary structure comprises 208 residues: LexA repressor (208 aa).

Residues 28–48 (RAEIARELGFRSANAAEEHLK) constitute a DNA-binding region (H-T-H motif). Catalysis depends on for autocatalytic cleavage activity residues Ser-125 and Lys-162.

Belongs to the peptidase S24 family. As to quaternary structure, homodimer.

It catalyses the reaction Hydrolysis of Ala-|-Gly bond in repressor LexA.. Functionally, represses a number of genes involved in the response to DNA damage (SOS response), including recA and lexA. In the presence of single-stranded DNA, RecA interacts with LexA causing an autocatalytic cleavage which disrupts the DNA-binding part of LexA, leading to derepression of the SOS regulon and eventually DNA repair. In Aliivibrio fischeri (strain MJ11) (Vibrio fischeri), this protein is LexA repressor.